We begin with the raw amino-acid sequence, 265 residues long: Ubiquinone biosynthesis protein COQ4 homolog, mitochondrial (265 aa).

4 residues coordinate Zn(2+): H162, D163, H166, and E178.

Belongs to the COQ4 family. In terms of assembly, component of a multi-subunit COQ enzyme complex. The cofactor is Zn(2+).

It localises to the mitochondrion inner membrane. The catalysed reaction is a 4-hydroxy-3-methoxy-5-(all-trans-polyprenyl)benzoate + H(+) = a 2-methoxy-6-(all-trans-polyprenyl)phenol + CO2. The protein operates within cofactor biosynthesis; ubiquinone biosynthesis. In terms of biological role, lyase that catalyzes the C1-decarboxylation of 4-hydroxy-3-methoxy-5-(all-trans-polyprenyl)benzoic acid into 2-methoxy-6-(all-trans-polyprenyl)phenol during ubiquinone biosynthesis. The sequence is that of Ubiquinone biosynthesis protein COQ4 homolog, mitochondrial from Drosophila willistoni (Fruit fly).